Consider the following 305-residue polypeptide: Probable xyloglucan endotransglucosylase/hydrolase protein 21 (305 aa).

Residues 1-25 (MVSSTLLVMSISLFLGLSILLVVHG) form the signal peptide. The 191-residue stretch at 26–216 (KDFNQDIDIT…WSQGPFVASF (191 aa)) folds into the GH16 domain. Asparagine 46 carries N-linked (GlcNAc...) asparagine glycosylation. Glutamate 102 (nucleophile) is an active-site residue. Glutamate 106 functions as the Proton donor in the catalytic mechanism. Glutamate 106 is a binding site for xyloglucan. N-linked (GlcNAc...) asparagine glycosylation is present at asparagine 110. Xyloglucan is bound by residues 119–121 (HTN) and 129–131 (DRE). A glycan (N-linked (GlcNAc...) asparagine) is linked at asparagine 146. Xyloglucan contacts are provided by residues 195–196 (DW) and glycine 200. Residues asparagine 206 and asparagine 231 are each glycosylated (N-linked (GlcNAc...) asparagine). 2 disulfides stabilise this stretch: cysteine 225-cysteine 239 and cysteine 282-cysteine 296. A compositionally biased stretch (low complexity) spans 236–253 (TSPCSPGDSTSSSSSSTS). Residues 236-258 (TSPCSPGDSTSSSSSSTSEWFSQ) are disordered. Position 287 (arginine 287) interacts with xyloglucan.

It belongs to the glycosyl hydrolase 16 family. XTH group 2 subfamily. In terms of processing, contains at least one intrachain disulfide bond essential for its enzymatic activity. As to expression, predominantly expressed in green siliques.

It is found in the secreted. It localises to the cell wall. The protein resides in the extracellular space. Its subcellular location is the apoplast. It carries out the reaction breaks a beta-(1-&gt;4) bond in the backbone of a xyloglucan and transfers the xyloglucanyl segment on to O-4 of the non-reducing terminal glucose residue of an acceptor, which can be a xyloglucan or an oligosaccharide of xyloglucan.. Catalyzes xyloglucan endohydrolysis (XEH) and/or endotransglycosylation (XET). Cleaves and religates xyloglucan polymers, an essential constituent of the primary cell wall, and thereby participates in cell wall construction of growing tissues. This chain is Probable xyloglucan endotransglucosylase/hydrolase protein 21 (XTH21), found in Arabidopsis thaliana (Mouse-ear cress).